Here is a 347-residue protein sequence, read N- to C-terminus: Dihydroorotate dehydrogenase (quinone) (347 aa).

FMN is bound by residues 62 to 66 (AGLDK) and alanine 86. Lysine 66 lines the substrate pocket. Substrate is bound at residue 111–115 (NRMGF). FMN is bound by residues asparagine 139 and asparagine 172. Residue asparagine 172 participates in substrate binding. Serine 175 (nucleophile) is an active-site residue. Substrate is bound at residue asparagine 177. FMN-binding residues include lysine 217 and threonine 245. 246–247 (NT) lines the substrate pocket. FMN is bound by residues glycine 268, glycine 297, and 318-319 (YT).

The protein belongs to the dihydroorotate dehydrogenase family. Type 2 subfamily. In terms of assembly, monomer. Requires FMN as cofactor.

The protein localises to the cell membrane. The enzyme catalyses (S)-dihydroorotate + a quinone = orotate + a quinol. It functions in the pathway pyrimidine metabolism; UMP biosynthesis via de novo pathway; orotate from (S)-dihydroorotate (quinone route): step 1/1. Its function is as follows. Catalyzes the conversion of dihydroorotate to orotate with quinone as electron acceptor. This Coxiella burnetii (strain CbuK_Q154) (Coxiella burnetii (strain Q154)) protein is Dihydroorotate dehydrogenase (quinone).